Here is a 663-residue protein sequence, read N- to C-terminus: MAU2 chromatid cohesion factor homolog (663 aa).

TPR repeat units lie at residues Gly455–Glu488 and Ser495–Ile528.

This sequence belongs to the SCC4/mau-2 family. As to quaternary structure, interacts with Nipped-B to form the cohesin loading complex.

It is found in the nucleus. The protein resides in the nucleoplasm. Required for association of the cohesin complex with chromatin during interphase. Plays a role in sister chromatid cohesion and normal progression through prometaphase. The polypeptide is MAU2 chromatid cohesion factor homolog (Drosophila willistoni (Fruit fly)).